The chain runs to 41 residues: Large ribosomal subunit protein bL36 (41 aa).

The protein belongs to the bacterial ribosomal protein bL36 family.

This chain is Large ribosomal subunit protein bL36, found in Methylocella silvestris (strain DSM 15510 / CIP 108128 / LMG 27833 / NCIMB 13906 / BL2).